The following is a 211-amino-acid chain: tRNA (guanine-N(7)-)-methyltransferase (211 aa).

Residues glutamate 43, glutamate 68, aspartate 95, and aspartate 117 each coordinate S-adenosyl-L-methionine. Aspartate 117 is a catalytic residue. Substrate-binding positions include lysine 121, aspartate 153, and 190 to 193 (TEYE).

The protein belongs to the class I-like SAM-binding methyltransferase superfamily. TrmB family.

The catalysed reaction is guanosine(46) in tRNA + S-adenosyl-L-methionine = N(7)-methylguanosine(46) in tRNA + S-adenosyl-L-homocysteine. It participates in tRNA modification; N(7)-methylguanine-tRNA biosynthesis. Catalyzes the formation of N(7)-methylguanine at position 46 (m7G46) in tRNA. The polypeptide is tRNA (guanine-N(7)-)-methyltransferase (Staphylococcus saprophyticus subsp. saprophyticus (strain ATCC 15305 / DSM 20229 / NCIMB 8711 / NCTC 7292 / S-41)).